The primary structure comprises 624 residues: Penicillin-binding protein 4 (624 aa).

The N-terminal stretch at 1–21 is a signal peptide; that stretch reads MTMLRKIIGWILLLCIIPLFA. Glu-96 acts as the Proton donor; for transglycosylase activity in catalysis. The active-site Acyl-ester intermediate; for transpeptidase activity is the Ser-388.

In the N-terminal section; belongs to the glycosyltransferase 51 family. This sequence in the C-terminal section; belongs to the transpeptidase family. In terms of processing, the N-terminus is blocked.

The protein localises to the cell membrane. The enzyme catalyses [GlcNAc-(1-&gt;4)-Mur2Ac(oyl-L-Ala-gamma-D-Glu-L-Lys-D-Ala-D-Ala)](n)-di-trans,octa-cis-undecaprenyl diphosphate + beta-D-GlcNAc-(1-&gt;4)-Mur2Ac(oyl-L-Ala-gamma-D-Glu-L-Lys-D-Ala-D-Ala)-di-trans,octa-cis-undecaprenyl diphosphate = [GlcNAc-(1-&gt;4)-Mur2Ac(oyl-L-Ala-gamma-D-Glu-L-Lys-D-Ala-D-Ala)](n+1)-di-trans,octa-cis-undecaprenyl diphosphate + di-trans,octa-cis-undecaprenyl diphosphate + H(+). It carries out the reaction Preferential cleavage: (Ac)2-L-Lys-D-Ala-|-D-Ala. Also transpeptidation of peptidyl-alanyl moieties that are N-acyl substituents of D-alanine.. Its function is as follows. Cell wall formation. Synthesis of cross-linked peptidoglycan from the lipid intermediates. The enzyme has a penicillin-insensitive transglycosylase N-terminal domain (formation of linear glycan strands) and a penicillin-sensitive transpeptidase C-terminal domain (cross-linking of the peptide subunits). Has a partially redundant function with PBP-2A (pbpA) during spore outgrowth. In Bacillus subtilis (strain 168), this protein is Penicillin-binding protein 4.